Here is a 305-residue protein sequence, read N- to C-terminus: Ribonuclease BN (305 aa).

Residues histidine 64, histidine 66, aspartate 68, histidine 69, histidine 141, aspartate 212, and histidine 270 each coordinate Zn(2+). Residue aspartate 68 is the Proton acceptor of the active site.

The protein belongs to the RNase Z family. RNase BN subfamily. As to quaternary structure, homodimer. It depends on Zn(2+) as a cofactor.

Zinc phosphodiesterase, which has both exoribonuclease and endoribonuclease activities. In Escherichia coli O157:H7, this protein is Ribonuclease BN.